The primary structure comprises 471 residues: 5-hydroxytryptamine receptor 2A (471 aa).

Residues 1-80 (MDILCEENTS…LQEKNWSALL (80 aa)) lie on the Extracellular side of the membrane. N-linked (GlcNAc...) asparagine glycosylation occurs at N38. The chain crosses the membrane as a helical span at residues 81–97 (TAVVIILTIAGNILVIM). The Cytoplasmic portion of the chain corresponds to 98 to 111 (AVSLEKKLQNATNY). A helical membrane pass occupies residues 112 to 137 (FLMSLAIADMLLGFLVMPVSMLTILY). Over 138–146 (GYRWPLPSK) the chain is Extracellular. Residues 147–171 (LCAVWIYLDVLFSTASIMHLCAISL) traverse the membrane as a helical segment. C148 and C227 form a disulfide bridge. Serotonin is bound at residue D155. The DRY motif; important for ligand-induced conformation changes signature appears at 172–174 (DRY). Topologically, residues 172 to 191 (DRYVAIQNPIHHSRFNSRTK) are cytoplasmic. Residues 192 to 215 (AFLKIIAVWTISVGISMPIPVFGL) traverse the membrane as a helical segment. At 216–232 (QDDSKVFKEGSCLLADD) the chain is on the extracellular side. The chain crosses the membrane as a helical span at residues 233–258 (NFVLIGSFVSFFIPLTIMVITYFLTI). The Cytoplasmic portion of the chain corresponds to 259–322 (KSLQKEATLC…QSISNEQKAC (64 aa)). S280 bears the Phosphoserine mark. Residues 323-348 (KVLGIVFSLFVVMWCPFFITNIMAVI) traverse the membrane as a helical segment. Position 343 (N343) interacts with serotonin. Residues C349 and C353 are joined by a disulfide bond. The Extracellular segment spans residues 349 to 356 (CKESCNED). The chain crosses the membrane as a helical span at residues 357-382 (VIGALLNVFVWIGYLSSAVNPLVYTL). The NPxxY motif; important for ligand-induced conformation changes and signaling signature appears at 376–380 (NPLVY). Residues 383–471 (FNKTYRSAFS…DGVNEKVSCV (89 aa)) are Cytoplasmic-facing. Positions 450–471 (KQHSEDASKDNSDGVNEKVSCV) are disordered. Over residues 451 to 465 (QHSEDASKDNSDGVN) the composition is skewed to basic and acidic residues. The PDZ-binding signature appears at 469-471 (SCV).

Belongs to the G-protein coupled receptor 1 family. In terms of assembly, interacts (via C-terminus) with MPDZ and PATJ. May interact (via C-terminus) with MPP3, PRDX6, DLG4, DLG1, CASK, APBA1 and MAGI2. Interacts with GRM2 and DRD2; this may affect signaling.

The protein localises to the cell membrane. The protein resides in the cell projection. Its subcellular location is the dendrite. It is found in the axon. It localises to the cytoplasmic vesicle. The protein localises to the membrane. The protein resides in the caveola. Its subcellular location is the presynapse. G-protein coupled receptor activity is regulated by lipids: oleamide increases HTR2A-mediated activity. Functionally, G-protein coupled receptor for 5-hydroxytryptamine (serotonin). Also functions as a receptor for various drugs and psychoactive substances, including mescaline, psilocybin, 1-(2,5-dimethoxy-4-iodophenyl)-2-aminopropane (DOI) and lysergic acid diethylamide (LSD). Ligand binding causes a conformation change that triggers signaling via guanine nucleotide-binding proteins (G proteins) and modulates the activity of downstream effectors. HTR2A is coupled to G(q)/G(11) G alpha proteins and activates phospholipase C-beta, releasing diacylglycerol (DAG) and inositol 1,4,5-trisphosphate (IP3) second messengers that modulate the activity of phosphatidylinositol 3-kinase and promote the release of Ca(2+) ions from intracellular stores, respectively. Beta-arrestin family members inhibit signaling via G proteins and mediate activation of alternative signaling pathways. Affects neural activity, perception, cognition and mood. Plays a role in the regulation of behavior, including responses to anxiogenic situations and psychoactive substances. Plays a role in intestinal smooth muscle contraction, and may play a role in arterial vasoconstriction. This chain is 5-hydroxytryptamine receptor 2A (HTR2A), found in Pongo pygmaeus (Bornean orangutan).